We begin with the raw amino-acid sequence, 627 residues long: Carene synthase, chloroplastic (627 aa).

Residues 1–36 (MSVISILPLASKSCLYKSLMSSTHELKALCRPIATL) constitute a chloroplast transit peptide. Residues aspartate 378, aspartate 382, and aspartate 530 each contribute to the Mg(2+) site. A DDXXD motif motif is present at residues 378–382 (DDMYD).

Belongs to the terpene synthase family. Tpsd subfamily. It depends on Mg(2+) as a cofactor. Requires Mn(2+) as cofactor.

The protein localises to the plastid. Its subcellular location is the chloroplast. It carries out the reaction (2E)-geranyl diphosphate = (+)-car-3-ene + diphosphate. The protein operates within terpene metabolism; oleoresin biosynthesis. Terpene synthase (TPS) involved in defensive oleoresin formation in conifers in response to insect attack or other injury. This is Carene synthase, chloroplastic (JF67) from Picea abies (Norway spruce).